The sequence spans 333 residues: Cytochrome f (333 aa).

The N-terminal stretch at 1-37 (MRNSCKKARRTRPLKATIQALLVAIATMTFFFTSDIA) is a signal peptide. Residues 38 to 298 (LPQSAAAYPF…TEIVLQDPNR (261 aa)) lie on the Cytoplasmic side of the membrane. Heme-binding residues include tyrosine 45, cysteine 66, cysteine 69, and histidine 70. A helical membrane pass occupies residues 299–319 (VKWMIAFICLVMLAQLMLILK). The Lumenal, thylakoid segment spans residues 320 to 333 (KKQVEKVQAAEMNF).

This sequence belongs to the cytochrome f family. As to quaternary structure, the 4 large subunits of the cytochrome b6-f complex are cytochrome b6, subunit IV (17 kDa polypeptide, PetD), cytochrome f and the Rieske protein, while the 4 small subunits are PetG, PetL, PetM and PetN. The complex functions as a dimer. Requires heme as cofactor.

It localises to the cellular thylakoid membrane. In terms of biological role, component of the cytochrome b6-f complex, which mediates electron transfer between photosystem II (PSII) and photosystem I (PSI), cyclic electron flow around PSI, and state transitions. The protein is Cytochrome f (petA) of Mastigocladus laminosus (Fischerella sp.).